Reading from the N-terminus, the 299-residue chain is ATP phosphoribosyltransferase (299 aa).

The protein belongs to the ATP phosphoribosyltransferase family. Long subfamily. The cofactor is Mg(2+).

Its subcellular location is the cytoplasm. The enzyme catalyses 1-(5-phospho-beta-D-ribosyl)-ATP + diphosphate = 5-phospho-alpha-D-ribose 1-diphosphate + ATP. It functions in the pathway amino-acid biosynthesis; L-histidine biosynthesis; L-histidine from 5-phospho-alpha-D-ribose 1-diphosphate: step 1/9. Feedback inhibited by histidine. In terms of biological role, catalyzes the condensation of ATP and 5-phosphoribose 1-diphosphate to form N'-(5'-phosphoribosyl)-ATP (PR-ATP). Has a crucial role in the pathway because the rate of histidine biosynthesis seems to be controlled primarily by regulation of HisG enzymatic activity. This Actinobacillus pleuropneumoniae serotype 7 (strain AP76) protein is ATP phosphoribosyltransferase.